The chain runs to 589 residues: Class I diterpene synthase 2, chloroplastic (589 aa).

Mg(2+) is bound by residues D328, D332, N472, T476, and E480. Positions 328–332 match the DDXXD motif motif; that stretch reads DDFFD.

Belongs to the terpene synthase family. It depends on Mg(2+) as a cofactor. Mostly expressed in trichomes of leaves and fruits.

The protein resides in the plastid. It localises to the chloroplast. The catalysed reaction is 9alpha-copalyl diphosphate + H2O = (13S)-vitexifolin A + diphosphate. It carries out the reaction peregrinol diphosphate = (13R)-9,13-epoxylabd-14-ene + diphosphate. The enzyme catalyses peregrinol diphosphate + H2O = viteagnusin D + diphosphate. It functions in the pathway secondary metabolite biosynthesis; terpenoid biosynthesis. Functionally, involved in the biosynthesis of labdane-type diterpenoid including cleroda-dienols, and peregrinol lactones and furan derivatives, dopaminergic diterpenoids that can bind to dopamine receptors in the human pituitary gland, have probably ability to lower prolactin levels, and are used to treat menstrual cycle disorders (e.g. premenstrual syndrome and mastodynia). Terpene synthase the catalyzes the conversion of peregrinol diphosphate to viteagnusin D and 9,13(R)-epoxy-labd-14-ene, and of syn-copalyl diphosophate to vitexifolin A. This is Class I diterpene synthase 2, chloroplastic from Vitex agnus-castus (Chaste tree).